We begin with the raw amino-acid sequence, 356 residues long: Hyaluronan and proteoglycan link protein 1 (356 aa).

Positions 1–9 (MRSLLLLVL) are excised as a propeptide. The 115-residue stretch at 40–154 (PRLLVEAEQA…EGLEDDTAVV (115 aa)) folds into the Ig-like V-type domain. Asn-58 carries an N-linked (GlcNAc...) asparagine glycan. 5 disulfide bridges follow: Cys-63/Cys-141, Cys-183/Cys-254, Cys-207/Cys-228, Cys-281/Cys-351, and Cys-306/Cys-327. 2 consecutive Link domains span residues 161–256 (VVFP…FCFT) and 261–353 (GRFY…YCFR).

The protein belongs to the HAPLN family. Ubiquitously expressed.

The protein localises to the secreted. Its subcellular location is the extracellular space. It localises to the extracellular matrix. Functionally, stabilizes the aggregates of proteoglycan monomers with hyaluronic acid in the extracellular cartilage matrix. In Mus musculus (Mouse), this protein is Hyaluronan and proteoglycan link protein 1 (Hapln1).